The primary structure comprises 211 residues: Troponin I, cardiac muscle (211 aa).

Ala1 bears the N-acetylalanine mark. A disordered region spans residues 1-43; that stretch reads ADESRDAAGEARPAPAPVRRRSSANYRAYATEPHAKSKKKISA. Ser4 carries the phosphoserine modification. The residue at position 22 (Ser22) is a Phosphoserine; by PHK, PKA and PKD/PRKD1. A Phosphoserine; by PKA and PKD/PRKD1 modification is found at Ser23. At Tyr26 the chain carries Phosphotyrosine. A Phosphothreonine; by STK4/MST1 modification is found at Thr31. Residues 32–79 form an involved in binding TNC region; it reads EPHAKSKKKISASRKLQLKTLMLQIAKQELEREAEERRGEKGRALSTR. Phosphoserine; by PKC/PRKCE is present on residues Ser42 and Ser44. Thr51 carries the post-translational modification Phosphothreonine; by STK4/MST1. Ser77 is subject to Phosphoserine. Thr78 is modified (phosphothreonine). Thr129 and Thr143 each carry phosphothreonine; by STK4/MST1. Residues 129-150 form an involved in binding TNC and actin region; the sequence is TQKIFDLRGKFKRPTLRLRVRI. Ser151 bears the Phosphoserine; by PAK3 mark. Position 182 is a phosphothreonine (Thr182). Phosphoserine is present on Ser200.

It belongs to the troponin I family. In terms of assembly, interacts with TRIM63. Binds to actin and tropomyosin. Interacts with STK4/MST1. In terms of processing, phosphorylated at Ser-22 and Ser-23 by PRKD1; phosphorylation reduces myofilament calcium sensitivity. Phosphorylated preferentially at Thr-31. Phosphorylation by STK4/MST1 alters its binding affinity to TNNC1 (cardiac Tn-C) and TNNT2 (cardiac Tn-T). Phosphorylated at Ser-42 and Ser-44 by PRKCE; phosphorylation increases myocardium contractile dysfunction. Ser-22 is one of three sites in the region of residues 1-48 that are phosphorylated by phosphorylase kinase.

Troponin I is the inhibitory subunit of troponin, the thin filament regulatory complex which confers calcium-sensitivity to striated muscle actomyosin ATPase activity. The sequence is that of Troponin I, cardiac muscle (TNNI3) from Oryctolagus cuniculus (Rabbit).